The primary structure comprises 356 residues: Tyrosine recombinase XerS (356 aa).

The Core-binding (CB) domain maps to 16-121 (LMPWYVLEYY…ALSSLYKYLT (106 aa)). A Tyr recombinase domain is found at 169-354 (EFLEYVDCEY…VNDEQKNALD (186 aa)). Active-site residues include Arg-210, Lys-234, His-306, Arg-309, and His-332. Tyr-341 functions as the O-(3'-phospho-DNA)-tyrosine intermediate in the catalytic mechanism.

Belongs to the 'phage' integrase family. XerS subfamily.

It localises to the cytoplasm. With respect to regulation, ftsK is required for recombination. Functionally, site-specific tyrosine recombinase, which acts by catalyzing the cutting and rejoining of the recombining DNA molecules. Essential to convert dimers of the bacterial chromosome into monomers to permit their segregation at cell division. The chain is Tyrosine recombinase XerS from Streptococcus mutans serotype c (strain ATCC 700610 / UA159).